Consider the following 503-residue polypeptide: Mitochondrial antiviral-signaling protein (503 aa).

Topologically, residues 1–478 (MTFAEDKTYK…HCASSMPWAK (478 aa)) are cytoplasmic. Residues Lys-7 and Lys-10 each participate in a glycyl lysine isopeptide (Lys-Gly) (interchain with G-Cter in ubiquitin) cross-link. The CARD domain occupies 10–77 (KYIRDNHSKF…WVEVFIRALQ (68 aa)). The segment at 10–77 (KYIRDNHSKF…WVEVFIRALQ (68 aa)) is required for interaction with NLRX1. The S-palmitoyl cysteine moiety is linked to residue Cys-79. The tract at residues 119-202 (GPSAFAPGHN…HQEQEPELGG (84 aa)) is disordered. The interval 143-147 (PVQDT) is interaction with TRAF2. Residues 145 to 166 (QDTQPPESPVENSEQLLQTNSG) show a composition bias toward polar residues. Phosphoserine occurs at positions 152, 157, 172, 186, and 220. Positions 153-158 (PVENSE) are interaction with TRAF6 1. The segment covering 178–189 (PSPNQQALSPQP) has biased composition (polar residues). Arg-234 carries the post-translational modification Asymmetric dimethylarginine. Phosphoserine occurs at positions 251 and 256. Lys-302 is covalently cross-linked (Glycyl lysine isopeptide (Lys-Gly) (interchain with G-Cter in ubiquitin)). The segment at 337–503 (PSRVPASVAK…MLYRSRRLAQ (167 aa)) is interaction with DHX33. The interval 346–398 (KAPANTIPPERNSKQAKETPEGPATKVTTGGNQTGPNSSIRSLHSGPEMSKPG) is disordered. The span at 356–365 (RNSKQAKETP) shows a compositional bias: basic and acidic residues. A compositionally biased stretch (polar residues) spans 371 to 387 (KVTTGGNQTGPNSSIRS). A Phosphoserine modification is found at Ser-384. The pLxIS motif signature appears at 415 to 418 (LAIS). Ser-418 carries the post-translational modification Phosphoserine; by TBK1. The interaction with TRAF6 2 stretch occupies residues 431–436 (PEENEY). Residues 446 to 466 (SPSADLLGSPEPLATQQPQEE) are disordered. The helical transmembrane segment at 479–496 (WLGATSALLAVFLAVMLY) threads the bilayer. The Mitochondrial intermembrane segment spans residues 497 to 503 (RSRRLAQ).

In terms of assembly, self-associates and polymerizes (via CARD domains) to form 400 nM long three-stranded helical filaments on mitochondria, filament nucleation requires interaction with RIGI whose CARD domains act as a template for filament assembly. Interacts with RIGI, IFIH1/MDA5, TRAF2, TRAF6 and C1QBP. May interact with FADD, RIPK1, IKBKE, CHUK and IKBKB. Interacts (when phosphorylated) with IRF3; following activation and phosphorylation on the pLxIS motif by TBK1, recruits IRF3. Interacts with NLRX1. Interaction with NLRX1 requires the CARD domain. Interacts with PSMA7. Interacts with TRAFD1. Interacts (via C-terminus) with PCBP2 in a complex containing MAVS/IPS1, PCBP2 and ITCH. Interacts with CYLD. Interacts with SRC. Interacts with DHX58/LGP2 and IKBKE. Interacts with STING1. Interacts with IFIT3 (via N-terminus). Interacts with TBK1 only in the presence of IFIT3. Interacts with TTLL12; the interaction prevents MAVS binding to TBK1 and IKBKE. Interacts with MUL1. Interacts with ANKRD17. Interacts with NDFIP1. Interacts with SMURF1; the interaction is mediated by NDFIP1 and leads to MAVS ubiquitination and degradation. Interacts (via C-terminus) with GPATCH3; the interaction is markedly increased upon viral infection. Directly interacts (via CARD domain) with ATG5 and ATG12, either as ATG5 and ATG12 monomers or as ATG12-ATG5 conjugates. Interacts with DHX33 (via the helicase C-terminal domain). Interacts with DDX3X (via C-terminus); this interaction may occur rapidly, but transiently after viral infection. The interaction with DDX3X potentiates MAVS-mediated IFNB induction. Conversely inhibition of this interaction prevents MAVS-mediated IFNB induction. Transiently interacts with TRAF3 early during viral infection. Interacts with CLPB. Interacts with TRAF3IP3. Interacts with TOMM70; the interaction is enhanced by virus infection. Interacts with ZNFX1. Interacts with DHX15. Interacts with N4BP3; this interaction promotes the polyubiquitination of MAVS. Interacts with TAX1BP1; this interaction induces MAVS polyubiquitination. Interacts with NLRP3; promoting NLRP3 recruitment to mitochondria and activation of the NLRP3 inflammasome. Interacts with ECSIT; this interaction bridges RIGI to the MAVS complex at the mitochondrion. Interacts with UBL7; this interaction promotes MAVS 'Lys-27'-linked ubiquitination leading to type I interferon production. Interacts (via transmembrane domain) with SMIM30/MAVI1 (via transmembrane domain); the interaction disrupts MAVS interaction with RIGI and inhibits MAVS aggregation, resulting in the repression of type I interferon signaling and innate immune responses. In terms of processing, following activation, phosphorylated by TBK1 at Ser-418 in the pLxIS motif. The phosphorylated pLxIS motif constitutes an IRF3-binding motif, leading to recruitment of the transcription factor IRF3 to induce type-I interferons and other cytokines. Post-translationally, ubiquitinated. Undergoes 'Lys-48'-linked polyubiquitination catalyzed by ITCH; ITCH-dependent polyubiquitination is mediated by the interaction with PCBP2 and leads to MAVS/IPS1 proteasomal degradation. Ubiquitinated by RNF125, leading to its degradation by the proteasome. Undergoes 'Lys-48'-linked ubiquitination catalyzed by SMURF1. Undergoes 'Lys-48'-linked ubiquitination catalyzed by MARCHF5 at Lys-7, leading to proteasomal degradation. Ubiquitinated via 'Lys-63'-linked ubiquitination at Lys-10 by TRIM31, promoting MAVS polymerization and formation of three-stranded helical filaments on mitochondria. Undergoes 'Lys-63'-linked ubiquitination leading to enhanced interaction between MAVS and TRAF2. Undergoes 'Lys-27'-linked ubiquitination by UBE2N and TRIM21 leading to enhanced interaction between MAVS and TBK1. Deubiquitinated by USP10 leading to attenuation of RIGI-mediated MAVS aggregation and production of type I interferon. Undergoes 'Lys-48'-linked polyubiquitination catalyzed by RNF115 leading to its degradation. Proteolytically cleaved by apoptotic caspases during apoptosis, leading to its inactivation. Cleavage by CASP3 during virus-induced apoptosis inactivates it, preventing cytokine overproduction. In terms of processing, palmitoylated by ZHDDC4. Palmitoylation promotes MAVS stabilization and activation by inhibiting 'Lys-48'- but facilitating 'Lys-63'-linked ubiquitination.

It is found in the mitochondrion outer membrane. The protein resides in the mitochondrion. It localises to the peroxisome. Its function is as follows. Adapter required for innate immune defense against viruses. Acts downstream of DHX33, RIGI and IFIH1/MDA5, which detect intracellular dsRNA produced during viral replication, to coordinate pathways leading to the activation of NF-kappa-B, IRF3 and IRF7, and to the subsequent induction of antiviral cytokines such as IFN-beta and RANTES (CCL5). Peroxisomal and mitochondrial MAVS act sequentially to create an antiviral cellular state. Upon viral infection, peroxisomal MAVS induces the rapid interferon-independent expression of defense factors that provide short-term protection, whereas mitochondrial MAVS activates an interferon-dependent signaling pathway with delayed kinetics, which amplifies and stabilizes the antiviral response. May activate the same pathways following detection of extracellular dsRNA by TLR3. May protect cells from apoptosis. Involved in NLRP3 inflammasome activation by mediating NLRP3 recruitment to mitochondria. This chain is Mitochondrial antiviral-signaling protein, found in Mus musculus (Mouse).